Here is a 378-residue protein sequence, read N- to C-terminus: Erythronate-4-phosphate dehydrogenase (378 aa).

S45 and T66 together coordinate substrate. 2 residues coordinate NAD(+): D146 and T175. R208 is a catalytic residue. Residue D232 coordinates NAD(+). The active site involves E237. H254 acts as the Proton donor in catalysis. Position 257 (G257) interacts with NAD(+). Residue Y258 participates in substrate binding.

The protein belongs to the D-isomer specific 2-hydroxyacid dehydrogenase family. PdxB subfamily. In terms of assembly, homodimer.

It localises to the cytoplasm. It catalyses the reaction 4-phospho-D-erythronate + NAD(+) = (R)-3-hydroxy-2-oxo-4-phosphooxybutanoate + NADH + H(+). It participates in cofactor biosynthesis; pyridoxine 5'-phosphate biosynthesis; pyridoxine 5'-phosphate from D-erythrose 4-phosphate: step 2/5. In terms of biological role, catalyzes the oxidation of erythronate-4-phosphate to 3-hydroxy-2-oxo-4-phosphonooxybutanoate. This is Erythronate-4-phosphate dehydrogenase from Escherichia coli O8 (strain IAI1).